Consider the following 183-residue polypeptide: Microfibrillar-associated protein 2 (183 aa).

Residues 1-17 form the signal peptide; that stretch reads MRAASLFLLFLPAGLLA. A Pyrrolidone carboxylic acid modification is found at Gln-18. Gln-20 is covalently cross-linked (Isoglutamyl lysine isopeptide (Gln-Lys) (interchain with K-?)). Residues Tyr-47, Tyr-48, and Tyr-50 each carry the sulfotyrosine modification. The region spanning 153–183 is the ShKT domain; the sequence is CRDKFSKCGVLASSGLCQSVAAACARSCGGC. 3 disulfides stabilise this stretch: Cys-153/Cys-183, Cys-160/Cys-176, and Cys-169/Cys-180.

This sequence belongs to the MFAP family. In terms of assembly, forms a ternary complex with BGN and ELN. Interacts with FBN1 (via N-terminal domain) and FBN2. Post-translationally, O-glycosylated; glycans consist of Gal(beta1-3)GalNAc. Forms intermolecular disulfide bonds either with other MAGP-1 molecules or with other components of the microfibrils. In terms of processing, forms transglutaminase cross-links with tropoelastin.

It localises to the secreted. The protein localises to the extracellular space. Its subcellular location is the extracellular matrix. In terms of biological role, component of the elastin-associated microfibrils. This Bos taurus (Bovine) protein is Microfibrillar-associated protein 2 (MFAP2).